Here is a 386-residue protein sequence, read N- to C-terminus: Patatin-17 (386 aa).

The N-terminal stretch at 1–23 (MATTKSFLILIFMILATTSSTFA) is a signal peptide. The PNPLA domain maps to 32–229 (LSIDGGGIRG…TVADPALLSI (198 aa)). The short motif at 36 to 41 (GGGIRG) is the GXGXXG element. Residues 75-79 (GTSTG) carry the GXSXG motif. S77 serves as the catalytic Nucleophile. The N-linked (GlcNAc...) asparagine glycan is linked to N202. D215 functions as the Proton acceptor in the catalytic mechanism. A DGA/G motif is present at residues 215–217 (DGA). Positions 321–384 (ENALTGTTTE…DRKKLRANKA (64 aa)) form a coiled coil.

It belongs to the patatin family.

It localises to the vacuole. Functionally, non-specific lipolytic acyl hydrolase (LAH), an activity which is thought to be involved in the response of tubers to pathogens. Catalyzes the non-specific hydrolysis of phospholipids, glycolipids, sulfolipids, and mono- and diacylglycerols includng p-nitrophenyl caprate. Confers resistance to southern corn rootworm (SCRW). This Solanum cardiophyllum (Heartleaf nightshade) protein is Patatin-17.